The following is a 70-amino-acid chain: Small ribosomal subunit protein bS21 (70 aa).

Belongs to the bacterial ribosomal protein bS21 family.

In Methylibium petroleiphilum (strain ATCC BAA-1232 / LMG 22953 / PM1), this protein is Small ribosomal subunit protein bS21.